Here is a 247-residue protein sequence, read N- to C-terminus: tRNA uridine(34) hydroxylase (247 aa).

In terms of domain architecture, Rhodanese spans 124-218 (TKQNVIVIDT…YLEDTHNKNN (95 aa)). The Cysteine persulfide intermediate role is filled by Cys-178.

The protein belongs to the TrhO family.

It carries out the reaction uridine(34) in tRNA + AH2 + O2 = 5-hydroxyuridine(34) in tRNA + A + H2O. In terms of biological role, catalyzes oxygen-dependent 5-hydroxyuridine (ho5U) modification at position 34 in tRNAs. This Rickettsia typhi (strain ATCC VR-144 / Wilmington) protein is tRNA uridine(34) hydroxylase.